A 297-amino-acid polypeptide reads, in one-letter code: Bifunctional protein FolD (297 aa).

NADP(+)-binding positions include 169–171 (GRS), S196, and I237.

It belongs to the tetrahydrofolate dehydrogenase/cyclohydrolase family. As to quaternary structure, homodimer.

The enzyme catalyses (6R)-5,10-methylene-5,6,7,8-tetrahydrofolate + NADP(+) = (6R)-5,10-methenyltetrahydrofolate + NADPH. It catalyses the reaction (6R)-5,10-methenyltetrahydrofolate + H2O = (6R)-10-formyltetrahydrofolate + H(+). It functions in the pathway one-carbon metabolism; tetrahydrofolate interconversion. Its function is as follows. Catalyzes the oxidation of 5,10-methylenetetrahydrofolate to 5,10-methenyltetrahydrofolate and then the hydrolysis of 5,10-methenyltetrahydrofolate to 10-formyltetrahydrofolate. This chain is Bifunctional protein FolD, found in Salinibacter ruber (strain DSM 13855 / M31).